We begin with the raw amino-acid sequence, 142 residues long: AVCVSLLGAANIPPQPLTFLQFNEMIECTIPGSFPLLDNMDCGCYCGTGGRGTPVDMLDRCCKEHDDCYAQIKENLKCSSLLNVPYVKQYSFTCSEGDLTCSDAAGTCARIVCDCDRTAALCFAEAPYKRRNFKIDYKTRCQ.

The N-terminal stretch at 1–9 is a signal peptide; sequence AVCVSLLGA. A propeptide spanning residues 10-17 is cleaved from the precursor; the sequence is ANIPPQPL. Intrachain disulfides connect Cys28-Cys94, Cys44-Cys141, Cys46-Cys62, Cys61-Cys122, Cys68-Cys115, Cys78-Cys108, and Cys101-Cys113. Ca(2+)-binding residues include Tyr45, Gly47, and Gly49. Residue His65 is part of the active site. A Ca(2+)-binding site is contributed by Asp66. Asp116 is an active-site residue.

It belongs to the phospholipase A2 family. Group I subfamily. D49 sub-subfamily. It depends on Ca(2+) as a cofactor. As to expression, expressed by the venom gland.

The protein localises to the secreted. It carries out the reaction a 1,2-diacyl-sn-glycero-3-phosphocholine + H2O = a 1-acyl-sn-glycero-3-phosphocholine + a fatty acid + H(+). Its function is as follows. PLA2 catalyzes the calcium-dependent hydrolysis of the 2-acyl groups in 3-sn-phosphoglycerides. The polypeptide is Acidic phospholipase A2 Bc-PL (Bungarus candidus (Malayan krait)).